The sequence spans 386 residues: MKTAVLSLFLALQTYARVTGSPSGFAAGTTGGGSATPAAPSSLDELVQWITDDKPRVILIDRTWDFIGTEGTTTGKCCSMPSTTVCSGGTSKGQAWIQDHCDGGSWVSCKYDNAALTPLDVGSNKSIVGVGNKGVIKGKGLRVRNGNKNVIIQNIHITNLNPQYVWGGDAITLDNADKVWIDHNKISLIGRQFIVSGWGKAGHVTISNNEFDGRTSWSAGCNGKHYWTLLLLGEQDYYTFQGNWLHDVSGRAPHMGTDHTKSQIFFHGVNNYFQNVGGHAFDVDTNTWVLLEGNYFENVNTPLTDTSLRAGGKLYTTSTVAAAGACQDKLGYICEWNRLAGSGAWKDRTDADVKTKAAAFKSSLVGHYPVADVPAKVVANAGVGKL.

The first 16 residues, 1–16, serve as a signal peptide directing secretion; that stretch reads MKTAVLSLFLALQTYA. Residues Cys77 and Cys101 are joined by a disulfide bond. Asn124 is a glycosylation site (N-linked (GlcNAc...) asparagine). The active site involves Arg251. Cysteines 326 and 334 form a disulfide.

It belongs to the polysaccharide lyase 1 family.

Its subcellular location is the secreted. It carries out the reaction Eliminative cleavage of (1-&gt;4)-alpha-D-galacturonan methyl ester to give oligosaccharides with 4-deoxy-6-O-methyl-alpha-D-galact-4-enuronosyl groups at their non-reducing ends.. Pectinolytic enzymes consist of four classes of enzymes: pectin lyase, polygalacturonase, pectin methylesterase and rhamnogalacturonase. Among pectinolytic enzymes, pectin lyase is the most important in depolymerization of pectin, since it cleaves internal glycosidic bonds of highly methylated pectins. This chain is Probable pectin lyase E (pelE), found in Aspergillus fumigatus (strain CBS 144.89 / FGSC A1163 / CEA10) (Neosartorya fumigata).